A 265-amino-acid polypeptide reads, in one-letter code: Tryptophan synthase alpha chain (265 aa).

Residues glutamate 49 and glutamate 60 each act as proton acceptor in the active site.

It belongs to the TrpA family. Tetramer of two alpha and two beta chains.

The catalysed reaction is (1S,2R)-1-C-(indol-3-yl)glycerol 3-phosphate + L-serine = D-glyceraldehyde 3-phosphate + L-tryptophan + H2O. The protein operates within amino-acid biosynthesis; L-tryptophan biosynthesis; L-tryptophan from chorismate: step 5/5. The alpha subunit is responsible for the aldol cleavage of indoleglycerol phosphate to indole and glyceraldehyde 3-phosphate. The chain is Tryptophan synthase alpha chain from Janthinobacterium sp. (strain Marseille) (Minibacterium massiliensis).